We begin with the raw amino-acid sequence, 330 residues long: Aspartate--ammonia ligase (330 aa).

This sequence belongs to the class-II aminoacyl-tRNA synthetase family. AsnA subfamily.

It localises to the cytoplasm. It carries out the reaction L-aspartate + NH4(+) + ATP = L-asparagine + AMP + diphosphate + H(+). It functions in the pathway amino-acid biosynthesis; L-asparagine biosynthesis; L-asparagine from L-aspartate (ammonia route): step 1/1. This is Aspartate--ammonia ligase from Streptococcus equi subsp. equi (strain 4047).